The following is a 432-amino-acid chain: Mannose-6-phosphate isomerase 1 (432 aa).

Residue Met-1 is modified to N-acetylmethionine. Zn(2+)-binding residues include Gln-124, His-126, Glu-151, and His-288. Arg-307 is a catalytic residue.

This sequence belongs to the mannose-6-phosphate isomerase type 1 family. Zn(2+) serves as cofactor. In terms of tissue distribution, constitutively expressed in both vegetative and reproductive organs under normal growth conditions (at protein level).

It catalyses the reaction D-mannose 6-phosphate = D-fructose 6-phosphate. It participates in nucleotide-sugar biosynthesis; GDP-alpha-D-mannose biosynthesis; alpha-D-mannose 1-phosphate from D-fructose 6-phosphate: step 1/2. Its activity is regulated as follows. Inhibited by EDTA, Zn(2+), Cd(2+), Co(2+), p-chloromercuribenzoate and L-ascorbic acid (AsA). In terms of biological role, phosphomannose isomerase involved in the synthesis of the GDP-mannose and dolichol-phosphate-mannose required for a number of critical mannosyl transfer reactions. Involved in the ascorbic acid (AsA) biosynthesis. Required during the endosperm development. The chain is Mannose-6-phosphate isomerase 1 (PMI1) from Arabidopsis thaliana (Mouse-ear cress).